The chain runs to 416 residues: MFSKSVTLAQYDPDLAAAIAQEDRRQQDHVELIASENYVSCAVMEAQGSQLTNKYAEGYPAKRYYGGCEYVDIVEQLAIDRVKELFGAAYANVQPHSGSQANQAVYASVLKPGDTILGMSLAHGGHLTHGASVNISGKLYNAVTYGLDENEVLDYAEVERLALEHKPKMIVAGASAYALQIDWAKFREIADKVGAYLFVDMAHYAGLVAGGEYPNPVPFCDFVTTTTHKTLRGPRGGVILCRDNTHEKALNSSIFPSLQGGPLMHVIAAKAVAFKEALQPEFKQYAKQVKINAAVMAEELVKRGLRIVSGRTESHVFLVDLQPMKITGKAAEAALGKAHITVNKNAIPNDPEKPFVTSGIRIGSAAMTTRGFNETDARVLSNLVADVLANPEDEANLAKVRGQVTALCDKYPVYGN.

(6S)-5,6,7,8-tetrahydrofolate is bound by residues leucine 121 and 125–127; that span reads GHL. N6-(pyridoxal phosphate)lysine is present on lysine 229.

The protein belongs to the SHMT family. In terms of assembly, homodimer. The cofactor is pyridoxal 5'-phosphate.

Its subcellular location is the cytoplasm. It catalyses the reaction (6R)-5,10-methylene-5,6,7,8-tetrahydrofolate + glycine + H2O = (6S)-5,6,7,8-tetrahydrofolate + L-serine. Its pathway is one-carbon metabolism; tetrahydrofolate interconversion. It functions in the pathway amino-acid biosynthesis; glycine biosynthesis; glycine from L-serine: step 1/1. Catalyzes the reversible interconversion of serine and glycine with tetrahydrofolate (THF) serving as the one-carbon carrier. This reaction serves as the major source of one-carbon groups required for the biosynthesis of purines, thymidylate, methionine, and other important biomolecules. Also exhibits THF-independent aldolase activity toward beta-hydroxyamino acids, producing glycine and aldehydes, via a retro-aldol mechanism. This Neisseria gonorrhoeae (strain NCCP11945) protein is Serine hydroxymethyltransferase.